The following is a 354-amino-acid chain: DNA polymerase IV (354 aa).

In terms of domain architecture, UmuC spans Ile6–Gly187. Positions 10 and 105 each coordinate Mg(2+). The active site involves Glu106.

Belongs to the DNA polymerase type-Y family. As to quaternary structure, monomer. The cofactor is Mg(2+).

It localises to the cytoplasm. It carries out the reaction DNA(n) + a 2'-deoxyribonucleoside 5'-triphosphate = DNA(n+1) + diphosphate. Poorly processive, error-prone DNA polymerase involved in untargeted mutagenesis. Copies undamaged DNA at stalled replication forks, which arise in vivo from mismatched or misaligned primer ends. These misaligned primers can be extended by PolIV. Exhibits no 3'-5' exonuclease (proofreading) activity. May be involved in translesional synthesis, in conjunction with the beta clamp from PolIII. The sequence is that of DNA polymerase IV from Pseudomonas putida (strain ATCC 47054 / DSM 6125 / CFBP 8728 / NCIMB 11950 / KT2440).